The chain runs to 525 residues: Peptide chain release factor 3 (525 aa).

Residues 8 to 276 form the tr-type G domain; that stretch reads AMRRTFAIIS…AFVKEAPPPQ (269 aa). GTP contacts are provided by residues 17–24, 85–89, and 139–142; these read SHPDAGKT, DTPGH, and NKMD.

It belongs to the TRAFAC class translation factor GTPase superfamily. Classic translation factor GTPase family. PrfC subfamily.

The protein localises to the cytoplasm. Increases the formation of ribosomal termination complexes and stimulates activities of RF-1 and RF-2. It binds guanine nucleotides and has strong preference for UGA stop codons. It may interact directly with the ribosome. The stimulation of RF-1 and RF-2 is significantly reduced by GTP and GDP, but not by GMP. The chain is Peptide chain release factor 3 from Coxiella burnetii (strain CbuK_Q154) (Coxiella burnetii (strain Q154)).